A 260-amino-acid chain; its full sequence is CD40 ligand (260 aa).

The Cytoplasmic segment spans residues 1-22 (MIETYSQTAPRSVATGPPVSMK). The chain crosses the membrane as a helical; Signal-anchor for type II membrane protein span at residues 23–46 (IFMYLLTVFLITQMIGSALFAVYL). The Extracellular portion of the chain corresponds to 47–260 (HRRLDKIEDE…GFTSFGLLKL (214 aa)). Residues 121–260 (IAAHVISEAS…GFTSFGLLKL (140 aa)) form the THD domain. Cys177 and Cys217 are oxidised to a cystine. Asn239 carries N-linked (GlcNAc...) asparagine glycosylation.

This sequence belongs to the tumor necrosis factor family. In terms of assembly, homotrimer. Interacts with CD28. CD40 ligand, soluble form: Exists as either a monomer or a homotrimer. Forms a ternary complex between CD40 and integrins for CD40-CD40LG signaling. The soluble form derives from the membrane form by proteolytic processing.

It is found in the cell membrane. It localises to the cell surface. The protein localises to the secreted. In terms of biological role, cytokine that acts as a ligand to CD40/TNFRSF5. Costimulates T-cell proliferation and cytokine production. Its cross-linking on T-cells generates a costimulatory signal which enhances the production of IL4 and IL10 in conjunction with the TCR/CD3 ligation and CD28 costimulation. Induces the activation of NF-kappa-B. Induces the activation of kinases MAPK8 and PAK2 in T-cells. Mediates B-cell proliferation in the absence of co-stimulus as well as IgE production in the presence of IL4. Involved in immunoglobulin class switching. Acts as a ligand for integrins, specifically ITGA5:ITGB1 and ITGAV:ITGB3; both integrins and the CD40 receptor are required for activation of CD40-CD40LG signaling, which have cell-type dependent effects, such as B-cell activation, NF-kappa-B signaling and anti-apoptotic signaling. The chain is CD40 ligand (CD40LG) from Canis lupus familiaris (Dog).